We begin with the raw amino-acid sequence, 218 residues long: Carnitine transport permease protein OpuCB (218 aa).

One can recognise an ABC transmembrane type-1 domain in the interval T19–L198. 5 helical membrane-spanning segments follow: residues L23 to L43, P48 to A68, V79 to F101, V149 to F169, and L179 to G199.

Belongs to the binding-protein-dependent transport system permease family. As to quaternary structure, the complex is composed of two ATP-binding proteins (OpuCA), two transmembrane proteins (OpuCB and OpuCD) and a solute-binding protein (OpuCC).

The protein resides in the cell membrane. Its function is as follows. Part of the ABC transporter complex OpuCABCD involved in carnitine uptake. Probably responsible for the translocation of the substrate across the membrane. Involved, with BetL and GbuABC, in osmoprotection and cryoprotection of Listeria. The sequence is that of Carnitine transport permease protein OpuCB (opuCB) from Listeria monocytogenes.